The sequence spans 245 residues: Protein crossbronx (245 aa).

The UBC core domain maps to 20 to 177 (HQEYKILAEY…VQESIAESKA (158 aa)).

It belongs to the ubiquitin-conjugating enzyme family. FTS subfamily.

In Drosophila mojavensis (Fruit fly), this protein is Protein crossbronx (cbx).